The primary structure comprises 298 residues: Cyclin-D4-2 (298 aa).

The protein belongs to the cyclin family. Cyclin D subfamily. In terms of assembly, interacts with CDKA-1 to form a kinase complex.

In terms of biological role, may promote cell division. The polypeptide is Cyclin-D4-2 (CYCD4-2) (Arabidopsis thaliana (Mouse-ear cress)).